The sequence spans 179 residues: Translation initiation factor IF-3 (179 aa).

Belongs to the IF-3 family. Monomer.

It is found in the cytoplasm. Its function is as follows. IF-3 binds to the 30S ribosomal subunit and shifts the equilibrium between 70S ribosomes and their 50S and 30S subunits in favor of the free subunits, thus enhancing the availability of 30S subunits on which protein synthesis initiation begins. This chain is Translation initiation factor IF-3, found in Buchnera aphidicola subsp. Acyrthosiphon pisum (strain 5A).